The sequence spans 226 residues: Cytidylate kinase (226 aa).

Position 10-18 (10-18 (GPASSGKST)) interacts with ATP.

The protein belongs to the cytidylate kinase family. Type 1 subfamily.

Its subcellular location is the cytoplasm. It carries out the reaction CMP + ATP = CDP + ADP. The catalysed reaction is dCMP + ATP = dCDP + ADP. The chain is Cytidylate kinase from Streptococcus pyogenes serotype M5 (strain Manfredo).